A 430-amino-acid chain; its full sequence is L-cysteine:1D-myo-inositol 2-amino-2-deoxy-alpha-D-glucopyranoside ligase (430 aa).

Cys-48 contributes to the Zn(2+) binding site. L-cysteinyl-5'-AMP is bound by residues 48–51 (CGIT), Thr-63, and 86–88 (NIT). The 'HIGH' region motif lies at 50–60 (ITPYDSTHLGH). The short motif at 192 to 197 (ERGGDP) is the 'ERGGDP' region element. Trp-232 contacts L-cysteinyl-5'-AMP. Cys-236 contacts Zn(2+). Residue 254–256 (GSD) coordinates L-cysteinyl-5'-AMP. His-261 is a Zn(2+) binding site. Residue Ile-288 coordinates L-cysteinyl-5'-AMP. Positions 294–298 (KMSKS) match the 'KMSKS' region motif.

This sequence belongs to the class-I aminoacyl-tRNA synthetase family. MshC subfamily. As to quaternary structure, monomer. Zn(2+) is required as a cofactor.

It catalyses the reaction 1D-myo-inositol 2-amino-2-deoxy-alpha-D-glucopyranoside + L-cysteine + ATP = 1D-myo-inositol 2-(L-cysteinylamino)-2-deoxy-alpha-D-glucopyranoside + AMP + diphosphate + H(+). Functionally, catalyzes the ATP-dependent condensation of GlcN-Ins and L-cysteine to form L-Cys-GlcN-Ins. The protein is L-cysteine:1D-myo-inositol 2-amino-2-deoxy-alpha-D-glucopyranoside ligase (mshC) of Corynebacterium efficiens (strain DSM 44549 / YS-314 / AJ 12310 / JCM 11189 / NBRC 100395).